The chain runs to 251 residues: 3-isopropylmalate dehydratase small subunit 1 (251 aa).

A chloroplast-targeting transit peptide spans 1–59 (MAASLQSANPTLSRTLASPNKPSSFATFRSPFLRFNSTSVASNFKPLVSREASSSFVTR).

This sequence belongs to the LeuD family. In terms of assembly, heterodimer of the large LEUC/IIL1 subunit and the small LEUD (SSU1, SSU2 or SSU3) subunits. As to expression, expressed at low levels in roots, root tips, at the basis of the hypocotyls, and in emerging leaves. In young seedlings, expressed in cotyledon epidermal cells. In hypocotyls, expressed in peripheral cells. In seedling roots, expressed in the epidermis, including root hairs, and throughout the cortex. In rosette leaves, expressed in the upper and lower epidermis. In roots of adult plants, expressed in the root tips and cortex of the mature root enclosing the stele. In flowering stalks, expressed in the epidermis. Expressed in the carpel epidermis.

It is found in the plastid. The protein resides in the chloroplast stroma. The enzyme catalyses (2R,3S)-3-isopropylmalate = (2S)-2-isopropylmalate. It participates in amino-acid biosynthesis; L-leucine biosynthesis; L-leucine from 3-methyl-2-oxobutanoate: step 2/4. Catalyzes the isomerization between 2-isopropylmalate and 3-isopropylmalate, via the formation of 2-isopropylmaleate. Plays an essential role in leucine biosynthesis. Functions in both the biosynthesis of leucine, and in the methionine chain elongation pathway of aliphatic glucosinolate formation. Plays an essential role in female gametophyte development. In Arabidopsis thaliana (Mouse-ear cress), this protein is 3-isopropylmalate dehydratase small subunit 1.